We begin with the raw amino-acid sequence, 269 residues long: Ubiquinone/menaquinone biosynthesis C-methyltransferase UbiE (269 aa).

S-adenosyl-L-methionine contacts are provided by residues threonine 92, aspartate 113, and 141 to 142 (NA).

Belongs to the class I-like SAM-binding methyltransferase superfamily. MenG/UbiE family.

It catalyses the reaction a 2-demethylmenaquinol + S-adenosyl-L-methionine = a menaquinol + S-adenosyl-L-homocysteine + H(+). The catalysed reaction is a 2-methoxy-6-(all-trans-polyprenyl)benzene-1,4-diol + S-adenosyl-L-methionine = a 5-methoxy-2-methyl-3-(all-trans-polyprenyl)benzene-1,4-diol + S-adenosyl-L-homocysteine + H(+). It participates in quinol/quinone metabolism; menaquinone biosynthesis; menaquinol from 1,4-dihydroxy-2-naphthoate: step 2/2. The protein operates within cofactor biosynthesis; ubiquinone biosynthesis. In terms of biological role, methyltransferase required for the conversion of demethylmenaquinol (DMKH2) to menaquinol (MKH2) and the conversion of 2-polyprenyl-6-methoxy-1,4-benzoquinol (DDMQH2) to 2-polyprenyl-3-methyl-6-methoxy-1,4-benzoquinol (DMQH2). This is Ubiquinone/menaquinone biosynthesis C-methyltransferase UbiE from Brucella suis biovar 1 (strain 1330).